The primary structure comprises 108 residues: UPF0145 protein Tery_3795 (108 aa).

Belongs to the UPF0145 family.

This chain is UPF0145 protein Tery_3795, found in Trichodesmium erythraeum (strain IMS101).